The following is a 228-amino-acid chain: uncharacterized protein (228 aa).

It localises to the mitochondrion. This is an uncharacterized protein from Emericella nidulans (Aspergillus nidulans).